Here is a 950-residue protein sequence, read N- to C-terminus: UvrABC system protein A (950 aa).

ATP is bound at residue 42 to 49; the sequence is GLSGSGKS. The C4-type zinc finger occupies 262-289; the sequence is CPVCSYSLPELEPRLFSFNNPMGSCPTC. ABC transporter domains are found at residues 319–596 and 616–945; these read WDKR…EKSV and VNPG…KYLK. An ATP-binding site is contributed by 649 to 656; the sequence is GVSGSGKS. The C4-type zinc finger occupies 748–774; it reads CEACQGDGVIKVEMHFLPDVYVPCEVC.

It belongs to the ABC transporter superfamily. UvrA family. Forms a heterotetramer with UvrB during the search for lesions.

The protein resides in the cytoplasm. In terms of biological role, the UvrABC repair system catalyzes the recognition and processing of DNA lesions. UvrA is an ATPase and a DNA-binding protein. A damage recognition complex composed of 2 UvrA and 2 UvrB subunits scans DNA for abnormalities. When the presence of a lesion has been verified by UvrB, the UvrA molecules dissociate. This chain is UvrABC system protein A, found in Neisseria gonorrhoeae.